The primary structure comprises 171 residues: Transcriptional repressor NrdR (171 aa).

Residues 3 to 34 (CPFCGDPNTQVADTRENEGGEVVRRRRRCPKC) fold into a zinc finger. The ATP-cone domain occupies 49–139 (PHIVKRNGNR…VYRNFADVDE (91 aa)). The tract at residues 148-171 (KARPKRNRPAEPPEPTSENDLFRS) is disordered.

This sequence belongs to the NrdR family. Requires Zn(2+) as cofactor.

Its function is as follows. Negatively regulates transcription of bacterial ribonucleotide reductase nrd genes and operons by binding to NrdR-boxes. This is Transcriptional repressor NrdR from Aromatoleum aromaticum (strain DSM 19018 / LMG 30748 / EbN1) (Azoarcus sp. (strain EbN1)).